Reading from the N-terminus, the 149-residue chain is MTDLKAQKRLAADILDVGENRVRFDPDAQAEIADAITREDIRELIEDGTIEAKTAKGNSRGRARKRQQKRAYGHKKGHGSRKGRSGGRQNEKEDWQSRIRAQRRELRELRDAGDISREQYRELYDMASGGEFDSVADLNRYIDDKHGEQ.

The tract at residues 46 to 99 is disordered; sequence EDGTIEAKTAKGNSRGRARKRQQKRAYGHKKGHGSRKGRSGGRQNEKEDWQSRI. Basic residues predominate over residues 59 to 85; that stretch reads SRGRARKRQQKRAYGHKKGHGSRKGRS. Over residues 89–99 the composition is skewed to basic and acidic residues; it reads QNEKEDWQSRI.

Belongs to the eukaryotic ribosomal protein eL19 family. Part of the 50S ribosomal subunit.

Binds to the 23S rRNA. The protein is Large ribosomal subunit protein eL19 of Natronomonas pharaonis (strain ATCC 35678 / DSM 2160 / CIP 103997 / JCM 8858 / NBRC 14720 / NCIMB 2260 / Gabara) (Halobacterium pharaonis).